Reading from the N-terminus, the 347-residue chain is Olfactory receptor 6J1 (347 aa).

At 1-24 (MGNWTAAVTEFVLLGFSLSREVEL) the chain is on the extracellular side. Asparagine 3 is a glycosylation site (N-linked (GlcNAc...) asparagine). The helical transmembrane segment at 25–45 (LLLVLLLPTFLLTLLGNLLII) threads the bilayer. Over 46 to 53 (STVLSCSR) the chain is Cytoplasmic. Residues 54-74 (LHTPMYFFLCNLSILDILFTS) form a helical membrane-spanning segment. Residues 75–98 (VISPKVLANLGSRDKTISFAGCIT) are Extracellular-facing. Cysteine 96 and cysteine 188 are joined by a disulfide. A helical membrane pass occupies residues 99–119 (QCYFYFFLGTVEFLLLTVMSY). The Cytoplasmic portion of the chain corresponds to 120–138 (DRYATICCPLRYTTIMRPS). A helical transmembrane segment spans residues 139–159 (VCIGTVVFSWVGGFLSVLFPT). The Extracellular portion of the chain corresponds to 160–196 (ILISQLPFCGSNIINHFFCDSGPLLALACADTTAIEL). The helical transmembrane segment at 197–216 (MDFMLSSMVILCCIVLVAYS) threads the bilayer. Topologically, residues 217-236 (YTYIILTIVRIPSASGRKKA) are cytoplasmic. Residues 237–257 (FNTCASHLTIVIISSGITVFI) form a helical membrane-spanning segment. At 258–270 (YVTPSQKEYLEIN) the chain is on the extracellular side. Residues 271 to 291 (KIPLVLSSVVTPFLNPFIYTL) form a helical membrane-spanning segment. At 292–347 (RNDTVQGVLRDVWVRVRGVFEKRMRAVLRSRLSSNKDHQGRACSSPPCVYSVKLQC) the chain is on the cytoplasmic side.

It belongs to the G-protein coupled receptor 1 family.

It localises to the cell membrane. Its function is as follows. Odorant receptor. The sequence is that of Olfactory receptor 6J1 (OR6J1) from Homo sapiens (Human).